We begin with the raw amino-acid sequence, 1408 residues long: ABC multidrug transporter MDR1 (1408 aa).

Over residues 1-13 (MSASPSPIGAAAG) the composition is skewed to low complexity. The interval 1-103 (MSASPSPIGA…SISSAVPKSH (103 aa)) is disordered. Residues 17 to 38 (LQARRDEEVVDSEKDALAHDSH) show a composition bias toward basic and acidic residues. Helical transmembrane passes span 147 to 167 (FAAPLEIVAMVFGLLLAIAAG) and 223 to 243 (LYLMAIGIGMFLATWLYMFIW). The 308-residue stretch at 157 to 464 (VFGLLLAIAA…LAPELAAVTK (308 aa)) folds into the ABC transmembrane type-1 1 domain. N-linked (GlcNAc...) asparagine glycosylation is present at Asn-244. A run of 4 helical transmembrane segments spans residues 296–316 (KVALVFQYAGTFVCGFVLAFV), 321–341 (LAGALISILPVIMICGGIMMT), 408–428 (IMFFAIYAAYALAFYYGGILV), and 436–456 (GIVINVFMSILIGSFSMAMLA). An ABC transporter 1 domain is found at 499–744 (ISFENVRFHY…ENGPYAQLVN (246 aa)). Position 534-541 (534-541 (GASGSGKS)) interacts with ATP. 2 helical membrane-spanning segments follow: residues 838 to 858 (IFAFIAAICAGMVYPSLAILF) and 882 to 902 (LWYFITALAAAIVIFFQSAGF). The region spanning 838–1125 (IFAFIAAICA…VFTFVPDASK (288 aa)) is the ABC transmembrane type-1 2 domain. Residue Asn-934 is glycosylated (N-linked (GlcNAc...) asparagine). 4 helical membrane-spanning segments follow: residues 952 to 972 (GLFGPTLGTVVQSCATLIGGC), 973 to 993 (IIGLCYGPLLSLIGIACIPIL), 1072 to 1092 (GLTFCIIALVFYIGALWIIDG), and 1099 to 1119 (FYTVLNSIVFASIQAGNVFTF). Residues Asn-1127 and Asn-1182 are each glycosylated (N-linked (GlcNAc...) asparagine). Residues 1162–1402 (VRIEGVHFRY…KGGYYDLVQM (241 aa)) form the ABC transporter 2 domain. ATP is bound at residue 1197–1204 (GPSGCGKS). Asn-1404 carries an N-linked (GlcNAc...) asparagine glycan.

The protein belongs to the ABC transporter superfamily. ABCB family. Multidrug resistance exporter (TC 3.A.1.201) subfamily.

It localises to the cell membrane. The catalysed reaction is itraconazole(in) + ATP + H2O = itraconazole(out) + ADP + phosphate + H(+). It carries out the reaction voriconazole(in) + ATP + H2O = voriconazole(out) + ADP + phosphate + H(+). It catalyses the reaction fluconazole(in) + ATP + H2O = fluconazole(out) + ADP + phosphate + H(+). In terms of biological role, pleiotropic ABC efflux transporter that confers resistance to structurally and functionally unrelated compounds including azoles such as fluconazole (FLC), itraconazole (ITC), posaconazole (POS), nocodazole and voriconazole (VRC). This chain is ABC multidrug transporter MDR1, found in Cryptococcus deuterogattii (strain R265) (Cryptococcus gattii VGII (strain R265)).